We begin with the raw amino-acid sequence, 425 residues long: MNYARFITAASAARNPSPIRTMTDILSRGPKSMISLAGGLPNPNMFPFKTAVITVENGKTIQFGEEMMKRALQYSPSAGIPELLSWLKQLQIKLHNPPTIHYPPSQGQMDLCVTSGSQQGLCKVFEMIINPGDNVLLDEPAYSGTLQSLHPLGCNIINVASDESGIVPDSLRDILSRWKPEDAKNPQKNTPKFLYTVPNGNNPTGNSLTSERKKEIYELARKYDFLIIEDDPYYFLQFNKFRVPTFLSMDVDGRVIRADSFSKIISSGLRIGFLTGPKPLIERVILHIQVSTLHPSTFNQLMISQLLHEWGEEGFMAHVDRVIDFYSNQKDAILAAADKWLTGLAEWHVPAAGMFLWIKVKGINDVKELIEEKAVKMGVLMLPGNAFYVDSSAPSPYLRASFSSASPEQMDVAFQVLAQLIKESL.

Residues 1–29 (MNYARFITAASAARNPSPIRTMTDILSRG) constitute a mitochondrion transit peptide. Arg-20 is a substrate binding site. Lys-69 carries the post-translational modification N6-acetyllysine. Substrate contacts are provided by Tyr-74 and Tyr-142. Lys-179 carries the N6-acetyllysine modification. Residues 181-208 (EDAKNPQKNTPKFLYTVPNGNNPTGNSL) form a disordered region. Residues 198-208 (PNGNNPTGNSL) show a composition bias toward polar residues. Asn-202 provides a ligand contact to substrate. Lys-263 carries the post-translational modification N6-(pyridoxal phosphate)lysine; alternate. An N6-acetyllysine; alternate mark is found at Lys-263, Lys-339, and Lys-367. Residues Lys-263, Lys-339, and Lys-367 each carry the N6-succinyllysine; alternate modification. A substrate-binding site is contributed by Arg-399. Lys-422 carries the N6-acetyllysine modification.

This sequence belongs to the class-I pyridoxal-phosphate-dependent aminotransferase family. As to quaternary structure, homodimer. Pyridoxal 5'-phosphate is required as a cofactor. As to expression, higher expression in the liver. Also found in heart, brain, kidney, pancreas, prostate, testis and ovary.

It is found in the mitochondrion. The enzyme catalyses glycine + 2-oxoglutarate = glyoxylate + L-glutamate. It carries out the reaction L-kynurenine + 2-oxoglutarate = kynurenate + L-glutamate + H2O. The catalysed reaction is L-kynurenine + glyoxylate = kynurenate + glycine + H2O. It catalyses the reaction 3-hydroxy-L-kynurenine + glyoxylate = xanthurenate + glycine + H2O. The enzyme catalyses 2-oxohexanoate + L-kynurenine = L-2-aminohexanoate + kynurenate + H2O. It carries out the reaction 3-phenylpyruvate + L-kynurenine = kynurenate + L-phenylalanine + H2O. The catalysed reaction is 4-methylsulfanyl-2-oxobutanoate + L-kynurenine = kynurenate + L-methionine + H2O. It catalyses the reaction 2-oxo-3-sulfanylpropanoate + L-kynurenine = kynurenate + L-cysteine + H2O. The enzyme catalyses indole-3-pyruvate + L-kynurenine = kynurenate + L-tryptophan + H2O. It carries out the reaction 2-oxopentanoate + L-kynurenine = L-2-aminopentanoate + kynurenate + H2O. The catalysed reaction is 4-methyl-2-oxopentanoate + L-kynurenine = kynurenate + L-leucine + H2O. It catalyses the reaction L-2-aminoadipate + 2-oxoglutarate = 2-oxoadipate + L-glutamate. The enzyme catalyses glyoxylate + L-methionine = 4-methylsulfanyl-2-oxobutanoate + glycine. It carries out the reaction L-2-aminoadipate + glyoxylate = 2-oxoadipate + glycine. The catalysed reaction is L-tyrosine + glyoxylate = 3-(4-hydroxyphenyl)pyruvate + glycine. It catalyses the reaction glyoxylate + L-phenylalanine = 3-phenylpyruvate + glycine. The enzyme catalyses L-tryptophan + glyoxylate = indole-3-pyruvate + glycine. It carries out the reaction L-leucine + glyoxylate = 4-methyl-2-oxopentanoate + glycine. The catalysed reaction is 2-oxobutanoate + L-kynurenine = (2S)-2-aminobutanoate + kynurenate + H2O. It catalyses the reaction 2-oxoadipate + L-kynurenine = L-2-aminoadipate + kynurenate + H2O. The protein operates within amino-acid degradation; L-lysine degradation via saccharopine pathway; glutaryl-CoA from L-lysine: step 4/6. Kynurenine transaminase activity is competitively inhibited by aminoadipate, asparagine, glutamate, histidine, cysteine, lysine, 3-hydroxy-kynurenine and phenylalanine. Functionally, transaminase with broad substrate specificity. Has transaminase activity towards aminoadipate, kynurenine, methionine and glutamate. Shows activity also towards tryptophan, aspartate and hydroxykynurenine. Accepts a variety of oxo-acids as amino-group acceptors, with a preference for 2-oxoglutarate, 2-oxocaproic acid, phenylpyruvate and alpha-oxo-gamma-methiol butyric acid. Can also use glyoxylate as amino-group acceptor (in vitro). In Homo sapiens (Human), this protein is Kynurenine/alpha-aminoadipate aminotransferase, mitochondrial.